A 308-amino-acid chain; its full sequence is HPr kinase/phosphorylase (308 aa).

Active-site residues include H138 and K159. 153-160 (GESGLGKS) contacts ATP. S160 lines the Mg(2+) pocket. Residue D177 is the Proton acceptor; for phosphorylation activity. Proton donor; for dephosphorylation activity of the active site. An important for the catalytic mechanism of both phosphorylation and dephosphorylation region spans residues 201–210 (LEVRGLGLLD). E202 contacts Mg(2+). R243 is an active-site residue. The segment at 264–269 (QVAAGR) is important for the catalytic mechanism of dephosphorylation.

It belongs to the HPrK/P family. Homohexamer. It depends on Mg(2+) as a cofactor.

The enzyme catalyses [HPr protein]-L-serine + ATP = [HPr protein]-O-phospho-L-serine + ADP + H(+). The catalysed reaction is [HPr protein]-O-phospho-L-serine + phosphate + H(+) = [HPr protein]-L-serine + diphosphate. Functionally, catalyzes the ATP- as well as the pyrophosphate-dependent phosphorylation of a specific serine residue in HPr, a phosphocarrier protein of the phosphoenolpyruvate-dependent sugar phosphotransferase system (PTS). HprK/P also catalyzes the pyrophosphate-producing, inorganic phosphate-dependent dephosphorylation (phosphorolysis) of seryl-phosphorylated HPr (P-Ser-HPr). In Bordetella pertussis (strain Tohama I / ATCC BAA-589 / NCTC 13251), this protein is HPr kinase/phosphorylase.